The chain runs to 462 residues: Violaxanthin de-epoxidase, chloroplastic (462 aa).

Cysteines 231 and 362 form a disulfide. The stretch at isoleucine 372 to phenylalanine 437 forms a coiled coil. The segment at glutamate 380–glutamate 391 is involved in the binding to the thylakoid membrane.

This sequence belongs to the calycin superfamily. Lipocalin family. In terms of assembly, interacts in vitro with LTO1.

The protein resides in the plastid. The protein localises to the chloroplast thylakoid membrane. The enzyme catalyses all-trans-violaxanthin + 2 L-ascorbate = all-trans-zeaxanthin + 2 L-dehydroascorbate + 2 H2O. With respect to regulation, activity limited by low ascorbate availability. Feedback inhibition by zeaxanthin. Requires the presence of micelle-forming lipids such as monogalactosyldiacylglyceride (MGDG). Low concentration of bilayer forming lipids, such as digalactosyldiacylglyceride (DGDG) or phosphatidylcholine, supports a slower but nearly complete activity. 80% of the specific activity in lumenal chloroplast fractions is lost in vitro in the presence of reduced thioredoxin. Part of the xanthophyll (or violaxanthin) cycle for controlling the concentration of zeaxanthin in chloroplasts. Catalyzes the two-step mono de-epoxidation reaction. Stereospecific for all-trans xanthophylls. Zeaxanthin induces the dissipation of excitation energy in the chlorophyll of the light-harvesting protein complex of photosystem II. This Arabidopsis thaliana (Mouse-ear cress) protein is Violaxanthin de-epoxidase, chloroplastic.